The following is a 423-amino-acid chain: UDP-N-acetylglucosamine 1-carboxyvinyltransferase (423 aa).

Residue K22–N23 participates in phosphoenolpyruvate binding. R93 serves as a coordination point for UDP-N-acetyl-alpha-D-glucosamine. C117 (proton donor) is an active-site residue. Position 117 is a 2-(S-cysteinyl)pyruvic acid O-phosphothioketal (C117). Residues R122–L126, D308, and V330 contribute to the UDP-N-acetyl-alpha-D-glucosamine site.

The protein belongs to the EPSP synthase family. MurA subfamily.

Its subcellular location is the cytoplasm. The enzyme catalyses phosphoenolpyruvate + UDP-N-acetyl-alpha-D-glucosamine = UDP-N-acetyl-3-O-(1-carboxyvinyl)-alpha-D-glucosamine + phosphate. It participates in cell wall biogenesis; peptidoglycan biosynthesis. In terms of biological role, cell wall formation. Adds enolpyruvyl to UDP-N-acetylglucosamine. The polypeptide is UDP-N-acetylglucosamine 1-carboxyvinyltransferase (Finegoldia magna (strain ATCC 29328 / DSM 20472 / WAL 2508) (Peptostreptococcus magnus)).